Reading from the N-terminus, the 253-residue chain is MSLPATFDLTPEDAQLLLAANVHLGSKNVQVHQEPYLYKTRPDGVNIIHIGKTWEKIVLAARIIAAIPNAEDVVAISSRTYGQRAVLKFSAHTGATAIAGRFTPGSFTNYITRSFKEPRLVIVTDPRSDAQAIKEASYVNIPVIALTDLESPSEYVDVAIPCNNRGKHSIGLIWYLLAREVLRLRGALVDRTQPWSIMPDLYFYRDPEEIEQQAAEEAAAGEEDDEAKEEVAAEEQTEAADWAEGQSEEVASW.

Position 2 is an N-acetylserine (serine 2). The segment at 212-253 (QQAAEEAAAGEEDDEAKEEVAAEEQTEAADWAEGQSEEVASW) is disordered. Positions 219–238 (AAGEEDDEAKEEVAAEEQTE) are enriched in acidic residues.

The protein belongs to the universal ribosomal protein uS2 family. Component of the small ribosomal subunit. Mature ribosomes consist of a small (40S) and a large (60S) subunit. The 40S subunit contains about 33 different proteins and 1 molecule of RNA (18S). The 60S subunit contains about 49 different proteins and 3 molecules of RNA (25S, 5.8S and 5S). Interacts with RPS21.

The protein localises to the cytoplasm. Functionally, required for the assembly and/or stability of the 40S ribosomal subunit. Required for the processing of the 20S rRNA-precursor to mature 18S rRNA in a late step of the maturation of 40S ribosomal subunits. In Eremothecium gossypii (strain ATCC 10895 / CBS 109.51 / FGSC 9923 / NRRL Y-1056) (Yeast), this protein is Small ribosomal subunit protein uS2.